Here is a 97-residue protein sequence, read N- to C-terminus: Type VII secretion system extracellular protein A (97 aa).

Residues 61–93 adopt a coiled-coil conformation; the sequence is KVEKFAQLLEEIKQQLNSTADAVQEQDQQLSNN.

Belongs to the WXG100 family. sagEsxA-like subfamily. In terms of assembly, forms both homodimers and heterodimers with EsxC.

The protein resides in the secreted. In terms of biological role, virulence factor that is important for the establishment of infection in the host. EsxA is required for EsxB synthesis as well as secretion. Modulates host cell apoptotic pathways and mediates together with EsxB the release of S.aureus from the host cell. By acting on apoptosis, plays a role in the modulation of dendritic cell-mediated immunity. This is Type VII secretion system extracellular protein A from Staphylococcus aureus (strain USA300).